Reading from the N-terminus, the 88-residue chain is uncharacterized protein (88 aa).

An N-terminal signal peptide occupies residues 1–23 (MAVSGLRLTIVWGLLVLILTCQA). Basic and acidic residues predominate over residues 25–40 (DKPEGKPDEQPHDSGK). The interval 25-45 (DKPEGKPDEQPHDSGKNSEPA) is disordered.

The protein resides in the secreted. This is an uncharacterized protein from Bos taurus (Bovine).